Reading from the N-terminus, the 371-residue chain is Histidinol-phosphate aminotransferase (371 aa).

Lysine 222 carries the N6-(pyridoxal phosphate)lysine modification.

The protein belongs to the class-II pyridoxal-phosphate-dependent aminotransferase family. Histidinol-phosphate aminotransferase subfamily. As to quaternary structure, homodimer. Requires pyridoxal 5'-phosphate as cofactor.

It catalyses the reaction L-histidinol phosphate + 2-oxoglutarate = 3-(imidazol-4-yl)-2-oxopropyl phosphate + L-glutamate. The protein operates within amino-acid biosynthesis; L-histidine biosynthesis; L-histidine from 5-phospho-alpha-D-ribose 1-diphosphate: step 7/9. This Anoxybacillus flavithermus (strain DSM 21510 / WK1) protein is Histidinol-phosphate aminotransferase.